Reading from the N-terminus, the 683-residue chain is Long-chain-fatty-acid--CoA ligase 5 (683 aa).

Residues 12-32 (LPTPALICLLTFGTAIFLWLI) form a helical; Signal-anchor for type III membrane protein membrane-spanning segment. The Cytoplasmic portion of the chain corresponds to 33-683 (NRPQPVLPLI…IKSLYESIEE (651 aa)). N6-acetyllysine is present on lysine 361.

The protein belongs to the ATP-dependent AMP-binding enzyme family. Expressed most abundantly in the small intestine, and to a much lesser extent in the lung, liver, adrenal gland, adipose tissue and kidney.

It is found in the mitochondrion. The protein resides in the endoplasmic reticulum. Its subcellular location is the mitochondrion outer membrane. The protein localises to the endoplasmic reticulum membrane. It localises to the cell membrane. It catalyses the reaction a long-chain fatty acid + ATP + CoA = a long-chain fatty acyl-CoA + AMP + diphosphate. The catalysed reaction is (5Z,8Z,11Z,14Z)-eicosatetraenoate + ATP + CoA = (5Z,8Z,11Z,14Z)-eicosatetraenoyl-CoA + AMP + diphosphate. The enzyme catalyses 15-hydroxy-(5Z,8Z,11Z,13E)-eicosatetraenoate + ATP + CoA = 15-hydroxy-(5Z,8Z,11Z,13E)-eicosatetraenoyl-CoA + AMP + diphosphate. It carries out the reaction 12-hydroxy-(5Z,8Z,10E,14Z)-eicosatetraenoate + ATP + CoA = 12-hydroxy-(5Z,8Z,10E,14Z)-eicosatetraenoyl-CoA + AMP + diphosphate. It catalyses the reaction 5-hydroxy-(6E,8Z,11Z,14Z)-eicosatetraenoate + ATP + CoA = 5-hydroxy-(6E,8Z,11Z,14Z)-eicosatetraenoyl-CoA + AMP + diphosphate. The catalysed reaction is 14,15-epoxy-(5Z,8Z,11Z)-eicosatrienoate + ATP + CoA = 14,15-epoxy-(5Z,8Z,11Z)-eicosatrienoyl-CoA + AMP + diphosphate. The enzyme catalyses 11,12-epoxy-(5Z,8Z,14Z)-eicosatrienoate + ATP + CoA = 11,12-epoxy-(5Z,8Z,14Z)-eicosatrienoyl-CoA + AMP + diphosphate. It carries out the reaction hexadecanoate + ATP + CoA = hexadecanoyl-CoA + AMP + diphosphate. It catalyses the reaction (E)-hexadec-2-enoate + ATP + CoA = (2E)-hexadecenoyl-CoA + AMP + diphosphate. The catalysed reaction is (9Z)-octadecenoate + ATP + CoA = (9Z)-octadecenoyl-CoA + AMP + diphosphate. Its function is as follows. Catalyzes the conversion of long-chain fatty acids to their active form acyl-CoAs for both synthesis of cellular lipids, and degradation via beta-oxidation. ACSL5 may sensitize epithelial cells to apoptosis specifically triggered by the death ligand TRAIL at the villus tip of the crypt-villus axis of the small intestine. May have a role in the survival of glioma cells. May activate fatty acids from exogenous sources for the synthesis of triacylglycerol destined for intracellular storage. It was suggested that it may also stimulate fatty acid oxidation. Utilizes a wide range of saturated fatty acids with a preference for C16-C18 unsaturated fatty acids. In Rattus norvegicus (Rat), this protein is Long-chain-fatty-acid--CoA ligase 5.